A 432-amino-acid polypeptide reads, in one-letter code: Trigger factor (432 aa).

One can recognise a PPIase FKBP-type domain in the interval 162-247 (GDLVKFDYQG…VKEVQAPVLP (86 aa)).

The protein belongs to the FKBP-type PPIase family. Tig subfamily.

The protein localises to the cytoplasm. The catalysed reaction is [protein]-peptidylproline (omega=180) = [protein]-peptidylproline (omega=0). Functionally, involved in protein export. Acts as a chaperone by maintaining the newly synthesized protein in an open conformation. Functions as a peptidyl-prolyl cis-trans isomerase. This Thiobacillus denitrificans (strain ATCC 25259 / T1) protein is Trigger factor.